The following is a 533-amino-acid chain: Metallothionein expression activator (533 aa).

C2H2-type zinc fingers lie at residues 443–472 (YVCL…SDRP) and 473–500 (YRCD…NGRP). A C2H2-type 3; atypical zinc finger spans residues 501–524 (YVCECLKRFNRLDALNRHKQRNIC).

It localises to the nucleus. In terms of biological role, regulates the transcription of genes required for cell separation. This Schizosaccharomyces pombe (strain 972 / ATCC 24843) (Fission yeast) protein is Metallothionein expression activator (ace2).